A 1164-amino-acid chain; its full sequence is DNA-directed RNA polymerase 132 kDa polypeptide (1164 aa).

The protein belongs to the RNA polymerase beta chain family. In terms of assembly, the DNA-dependent RNA polymerase used for intermediate and late genes expression consists of eight subunits (147) kDa, (133) kDa, (35) kDa, (30) kDa, (22) kDa, (19) kDa, (18) kDa and (7) kDa totalling more than 500 kDa in mass. The same holoenzyme, with the addition of the transcription-specificity factor RAP94, is used for early gene expression.

It is found in the virion. It catalyses the reaction RNA(n) + a ribonucleoside 5'-triphosphate = RNA(n+1) + diphosphate. Its function is as follows. Part of the DNA-dependent RNA polymerase which catalyzes the transcription of viral DNA into RNA using the four ribonucleoside triphosphates as substrates. Responsible for the transcription of early, intermediate and late genes. DNA-dependent RNA polymerase associates with the early transcription factor (ETF), itself composed of D6 and A7, thereby allowing the early genes transcription. Late transcription, and probably also intermediate transcription, require newly synthesized RNA polymerase. The chain is DNA-directed RNA polymerase 132 kDa polypeptide (RPO132) from Cowpox virus (strain GRI-90 / Grishak) (CPV).